The sequence spans 666 residues: UvrABC system protein B (666 aa).

One can recognise a Helicase ATP-binding domain in the interval 28–171 (NNINQGIQRQ…YLHVGELIEF (144 aa)). 41–48 (GATGTGKT) lines the ATP pocket. The short motif at 94-117 (YFDYYQPEAYKPITDTYIEKDSVT) is the Beta-hairpin element. The Helicase C-terminal domain maps to 436 to 598 (QIDDLINELM…IIPKTIIKPI (163 aa)). Residues 624–659 (NQKIKELKKKMEEAAKKREYEVAAQYRDMIVELEAI) enclose the UVR domain.

It belongs to the UvrB family. As to quaternary structure, forms a heterotetramer with UvrA during the search for lesions. Interacts with UvrC in an incision complex.

The protein localises to the cytoplasm. Its function is as follows. The UvrABC repair system catalyzes the recognition and processing of DNA lesions. A damage recognition complex composed of 2 UvrA and 2 UvrB subunits scans DNA for abnormalities. Upon binding of the UvrA(2)B(2) complex to a putative damaged site, the DNA wraps around one UvrB monomer. DNA wrap is dependent on ATP binding by UvrB and probably causes local melting of the DNA helix, facilitating insertion of UvrB beta-hairpin between the DNA strands. Then UvrB probes one DNA strand for the presence of a lesion. If a lesion is found the UvrA subunits dissociate and the UvrB-DNA preincision complex is formed. This complex is subsequently bound by UvrC and the second UvrB is released. If no lesion is found, the DNA wraps around the other UvrB subunit that will check the other stand for damage. The chain is UvrABC system protein B from Ureaplasma parvum serovar 3 (strain ATCC 27815 / 27 / NCTC 11736).